The chain runs to 505 residues: Maturase K (505 aa).

Belongs to the intron maturase 2 family. MatK subfamily.

The protein localises to the plastid. It localises to the chloroplast. In terms of biological role, usually encoded in the trnK tRNA gene intron. Probably assists in splicing its own and other chloroplast group II introns. The sequence is that of Maturase K from Ficus carica (Common fig).